A 542-amino-acid polypeptide reads, in one-letter code: MKTRDSQSSDVIIIGGGATGAGIARDCALRGLRVILVERHDIATGATGRNHGLLHSGARYAVTDAESARECISENQILKRIARHCVEPTNGLFITLPEDDLSFQATFIRACEEAGISAEAIDPQQARIIEPAVNPALIGAVKVPDGTVDPFRLTAANMLDAKEHGAVILTAHEVTGLIREGATVCGVRVRNHLTGETQALHAPVVVNAAGIWGQHIAEYADLRIRMFPAKGSLLIMDHRINQHVINRCRKPSDADILVPGDTISLIGTTSLRIDYNEIDDNRVTAEEVDILLREGEKLAPVMAKTRILRAYSGVRPLVASDDDPSGRNVSRGIVLLDHAERDGLDGFITITGGKLMTYRLMAEWATDAVCRKLGNTRPCTTADLALPGSQEPAEVTLRKVISLPAPLRGSAVYRHGDRTPAWLSEGRLHRSLVCECEAVTAGEVQYAVENLNVNSLLDLRRRTRVGMGTCQGELCACRAAGLLQRFNVTTSAQSIEQLSTFLNERWKGVQPIAWGDALRESEFTRWVYQGLCGLEKEQKDAL.

10–38 (DVIIIGGGATGAGIARDCALRGLRVILVE) contacts FAD.

Belongs to the FAD-dependent glycerol-3-phosphate dehydrogenase family. In terms of assembly, composed of a catalytic GlpA/B dimer and of membrane bound GlpC. It depends on FAD as a cofactor. FMN serves as cofactor.

Its subcellular location is the cell inner membrane. The catalysed reaction is a quinone + sn-glycerol 3-phosphate = dihydroxyacetone phosphate + a quinol. Its pathway is polyol metabolism; glycerol degradation via glycerol kinase pathway; glycerone phosphate from sn-glycerol 3-phosphate (anaerobic route): step 1/1. Conversion of glycerol 3-phosphate to dihydroxyacetone. Uses fumarate or nitrate as electron acceptor. The polypeptide is Anaerobic glycerol-3-phosphate dehydrogenase subunit A (glpA) (Escherichia coli O157:H7).